Reading from the N-terminus, the 620-residue chain is Probable potassium transport system protein Kup (620 aa).

The next 12 helical transmembrane spans lie at 8–28 (VGLLVSAVGVVFGDIGTSPLY), 50–70 (VLSLVFWTVMLLVTVKYVILI), 102–122 (MLLGVIAAALFYGDSMITPAI), 136–156 (PDLKAYVVPITALVLTGLFAI), 168–188 (FGPVMCLWFVTLALLGIANIV), 211–231 (LMSFYALGTVVLAVTGGEALY), 246–266 (WFSLVLPALLLNYFGQGALLI), 284–304 (MVMPMVALATLATVIASQAVI), 336–356 (IYVPFTNWTLYFAVMALVIGF), 368–388 (IAVTGTMMIDTILVSFVMALL), 393–413 (MALVIVVAGTLLLVDFAYFAA), and 415–435 (IIKVAQGGWFPLFIGFISFTV).

This sequence belongs to the HAK/KUP transporter (TC 2.A.72) family.

The protein resides in the cell inner membrane. It carries out the reaction K(+)(in) + H(+)(in) = K(+)(out) + H(+)(out). In terms of biological role, transport of potassium into the cell. Likely operates as a K(+):H(+) symporter. In Rhodopseudomonas palustris (strain HaA2), this protein is Probable potassium transport system protein Kup.